We begin with the raw amino-acid sequence, 123 residues long: Small ribosomal subunit protein uS13 (123 aa).

Residues 97–123 (PVRGQRTHTNAKTRKGRSRLPVAAKKK) are disordered.

It belongs to the universal ribosomal protein uS13 family. Part of the 30S ribosomal subunit. Forms a loose heterodimer with protein S19. Forms two bridges to the 50S subunit in the 70S ribosome.

Located at the top of the head of the 30S subunit, it contacts several helices of the 16S rRNA. In the 70S ribosome it contacts the 23S rRNA (bridge B1a) and protein L5 of the 50S subunit (bridge B1b), connecting the 2 subunits; these bridges are implicated in subunit movement. Contacts the tRNAs in the A and P-sites. This is Small ribosomal subunit protein uS13 from Ehrlichia ruminantium (strain Gardel).